The primary structure comprises 1103 residues: A disintegrin and metalloproteinase with thrombospondin motifs 10 (1103 aa).

An N-terminal signal peptide occupies residues 1-25; it reads MAPACQILRWALALGLGLMFEVTHA. Residues 26 to 233 constitute a propeptide that is removed on maturation; the sequence is FRSQDEFLSS…TERGQPGLKR (208 aa). N-linked (GlcNAc...) asparagine glycans are attached at residues Asn90, Asn222, and Asn323. Residues 213–233 are disordered; the sequence is KPPPARPLGNETERGQPGLKR. The region spanning 239-457 is the Peptidase M12B domain; that stretch reads RYVETLVVAD…GLGLCLNNRP (219 aa). 11 disulfide bridges follow: Cys315/Cys376, Cys351/Cys358, Cys370/Cys452, Cys409/Cys436, Cys479/Cys501, Cys490/Cys508, Cys496/Cys531, Cys521/Cys536, Cys559/Cys596, Cys563/Cys601, and Cys574/Cys586. A Zn(2+)-binding site is contributed by His392. Residue Glu393 is part of the active site. Residues His396 and His402 each contribute to the Zn(2+) site. Residues 460–546 enclose the Disintegrin domain; it reads QDFVYPTVAP…VPFGSRPEGV (87 aa). The TSP type-1 1 domain maps to 547–602; that stretch reads DGAWGPWTPWGDCSRTCGGGVSSSSRHCDSPRPTIGGKYCLGERRRHRSCNTDDCP. Residues 706–828 form a spacer region; it reads ETIEGVFSPA…IARDSLPPYS (123 aa). Residues Asn740 and Asn795 are each glycosylated (N-linked (GlcNAc...) asparagine). TSP type-1 domains lie at 825–883, 884–945, 947–1001, and 1003–1058; these read PPYS…NTEP, CPPD…PTCP, EWAA…NLRR, and PPAR…AKCD. N-linked (GlcNAc...) asparagine glycosylation is present at Asn892. In terms of domain architecture, PLAC spans 1065 to 1103; that stretch reads GPEECKDVNKVAYCPLVLKFQFCSRAYFRQMCCKTCHGH.

As to quaternary structure, interacts with FBN1; this interaction promotes microfibrils assembly. Zn(2+) is required as a cofactor. Post-translationally, glycosylated. Can be O-fucosylated by POFUT2 on a serine or a threonine residue found within the consensus sequence C1-X(2)-(S/T)-C2-G of the TSP type-1 repeat domains where C1 and C2 are the first and second cysteine residue of the repeat, respectively. Fucosylated repeats can then be further glycosylated by the addition of a beta-1,3-glucose residue by the glucosyltransferase, B3GALTL. Fucosylation mediates the efficient secretion of ADAMTS family members. Can also be C-glycosylated with one or two mannose molecules on tryptophan residues within the consensus sequence W-X-X-W of the TPRs, and N-glycosylated. These other glycosylations can also facilitate secretion. As to expression, widely expressed in adult tissues.

The protein localises to the secreted. It localises to the extracellular space. The protein resides in the extracellular matrix. In terms of biological role, metalloprotease that participate in microfibrils assembly. Microfibrils are extracellular matrix components occurring independently or along with elastin in the formation of elastic tissues. The chain is A disintegrin and metalloproteinase with thrombospondin motifs 10 (ADAMTS10) from Homo sapiens (Human).